Reading from the N-terminus, the 253-residue chain is ER membrane protein complex subunit 3 (253 aa).

Helical transmembrane passes span 10–30, 126–146, and 176–196; these read WVLL…QYIM, FIPQ…FILM, and SISW…LIGL.

This sequence belongs to the EMC3 family. Component of the ER membrane protein complex (EMC), which is composed of EMC1, EMC2, EMC3, EMC4, EMC5 and EMC6.

It localises to the endoplasmic reticulum membrane. Its function is as follows. The EMC seems to be required for efficient folding of proteins in the endoplasmic reticulum (ER). The sequence is that of ER membrane protein complex subunit 3 (AIM27) from Saccharomyces cerevisiae (strain RM11-1a) (Baker's yeast).